Here is a 966-residue protein sequence, read N- to C-terminus: C4 phosphoenolpyruvate carboxylase (966 aa).

S11 carries the post-translational modification Phosphoserine. The active site involves H172. Residues W283, R450, and D597 each contribute to the D-glucose 6-phosphate site. K600 is a catalytic residue. Residue R635 coordinates D-glucose 6-phosphate. R641 is an active-site residue. Position 641 (R641) interacts with L-aspartate. Residue T665 coordinates D-glucose 6-phosphate. An L-aspartate-binding site is contributed by Q673. Residues R753 and 767 to 769 (RAI) contribute to the D-glucose 6-phosphate site. Residues K829, R888, and N964 each coordinate L-aspartate.

This sequence belongs to the PEPCase type 1 family. In terms of assembly, homotetramer. It depends on Mg(2+) as a cofactor. In terms of tissue distribution, expressed in mesophyll cells, but not in bundle-sheath, roots, stems and flowers.

The protein resides in the cytoplasm. It carries out the reaction oxaloacetate + phosphate = phosphoenolpyruvate + hydrogencarbonate. It functions in the pathway photosynthesis; C4 acid pathway. Its activity is regulated as follows. 5 fold activation by the allosteric regulator glucose-6-phosphate. Low sensitivity to inhibition by L-malate and L-aspartate. Up-regulated by light-reversible phosphorylation. In terms of biological role, forms oxaloacetate through the carboxylation of phosphoenolpyruvate (PEP). Catalyzes the first step of C4 photosynthesis. In Flaveria trinervia (Clustered yellowtops), this protein is C4 phosphoenolpyruvate carboxylase.